The primary structure comprises 357 residues: Protein-glutamate methylesterase/protein-glutamine glutaminase 1 (357 aa).

The 119-residue stretch at 7-125 (RAVIIDDSLL…QFDPEEIGNI (119 aa)) folds into the Response regulatory domain. Aspartate 58 bears the 4-aspartylphosphate mark. Residues 162–344 (KKSPIQAICI…VEYIEPVTEI (183 aa)) enclose the CheB-type methylesterase domain. Residues serine 174, histidine 201, and aspartate 297 contribute to the active site.

It belongs to the CheB family. Post-translationally, phosphorylated by CheA. Phosphorylation of the N-terminal regulatory domain activates the methylesterase activity.

It localises to the cytoplasm. It carries out the reaction [protein]-L-glutamate 5-O-methyl ester + H2O = L-glutamyl-[protein] + methanol + H(+). It catalyses the reaction L-glutaminyl-[protein] + H2O = L-glutamyl-[protein] + NH4(+). Functionally, involved in chemotaxis. Part of a chemotaxis signal transduction system that modulates chemotaxis in response to various stimuli. Catalyzes the demethylation of specific methylglutamate residues introduced into the chemoreceptors (methyl-accepting chemotaxis proteins or MCP) by CheR. Also mediates the irreversible deamidation of specific glutamine residues to glutamic acid. The chain is Protein-glutamate methylesterase/protein-glutamine glutaminase 1 from Leptospira interrogans serogroup Icterohaemorrhagiae serovar Lai (strain 56601).